The sequence spans 624 residues: Bifunctional protein ArgH (624 aa).

An argininosuccinate lyase region spans residues 1 to 466; the sequence is MALWGGRFTQ…AARDTTLVKV (466 aa). Residues 464-614 form the N-acetyltransferase domain; the sequence is VKVRPARITD…DEVALEFNLS (151 aa). The probable acetyltransferase stretch occupies residues 467–624; it reads RPARITDIET…EQIISQVKVA (158 aa).

In the N-terminal section; belongs to the lyase 1 family. Argininosuccinate lyase subfamily.

It is found in the cytoplasm. The enzyme catalyses 2-(N(omega)-L-arginino)succinate = fumarate + L-arginine. Its pathway is amino-acid biosynthesis; L-arginine biosynthesis; L-arginine from L-ornithine and carbamoyl phosphate: step 3/3. The polypeptide is Bifunctional protein ArgH (argH) (Vibrio vulnificus (strain CMCP6)).